The sequence spans 398 residues: Mitochondrial protein import protein mas5 (398 aa).

The region spanning 7-88 is the J domain; sequence GYYKVLELSP…KKKKEYDSGM (82 aa). Residues 139-219 form a CR-type zinc finger; it reads GKVSKFNVRT…CNGAEYIQDK (81 aa). 144-146 contributes to the substrate binding site; it reads FNV. Positions 152, 155, 166, 169, 192, 195, 207, and 210 each coordinate Zn(2+). CXXCXGXG motif repeat units lie at residues 152-159, 166-173, 192-199, and 207-214; these read CTTCDGKG, CKKCNGNG, CDGCDGSG, and CSTCNGAE. Substrate contacts are provided by residues 221–222 and 253–255; these read MF and VIF. The interval 367-386 is disordered; it reads FGSMPEPERDHEDASEEGAQ.

The protein belongs to the DnaJ family. Homodimer. Zn(2+) serves as cofactor.

It is found in the cytoplasm. Probably involved in mitosomal protein import. This is Mitochondrial protein import protein mas5 (MAS5) from Encephalitozoon cuniculi (strain GB-M1) (Microsporidian parasite).